Here is a 134-residue protein sequence, read N- to C-terminus: Profilin-2 (134 aa).

A disulfide bridge links C13 with C118. The Involved in PIP2 interaction signature appears at 84-100 (AVIRGKKGSGGITIKKT). Phosphothreonine is present on T114.

This sequence belongs to the profilin family. As to quaternary structure, occurs in many kinds of cells as a complex with monomeric actin in a 1:1 ratio. Post-translationally, phosphorylated by MAP kinases.

The protein localises to the cytoplasm. It localises to the cytoskeleton. Binds to actin and affects the structure of the cytoskeleton. At high concentrations, profilin prevents the polymerization of actin, whereas it enhances it at low concentrations. The protein is Profilin-2 of Olea europaea (Common olive).